The chain runs to 168 residues: Plasma membrane-associated cation-binding protein 2 (168 aa).

G2 is lipidated: N-myristoyl glycine. Tandem repeats lie at residues 26–30, 69–73, 94–99, 103–107, 110–115, 118–122, and 124–129. Positions 26-129 are 7 X 5 AA approximate repeats of V-E-E-K-K; that stretch reads VEEEKPREVE…EKKPVEEEKK (104 aa). Positions 56–77 form a coiled coil; that stretch reads EEIIATGEKEIEIVEEKKEEAK. Over residues 88-131 the composition is skewed to basic and acidic residues; that stretch reads EEKKPAVEEEKKTAPVEEKKPAVEEEKKPAVEEKKPVEEEKKEV. The interval 88 to 168 is disordered; the sequence is EEKKPAVEEE…ETPAAAPQKA (81 aa). The span at 152 to 168 shows a compositional bias: low complexity; it reads ETPAKAPETPAAAPQKA.

This sequence belongs to the DREPP family. As to quaternary structure, binds microtubules. Interacts with calcium ion Ca(2+), calmodulin and some phosphatidylinositol phosphates (PtdInsPs) such as phosphatidylinositol 3,5-bisphosphate [PtdIns(3,5)P(2)], PtdIns(4,5)P(2) and PtdIns(3,4,5)P(3). Cu(2+) is required as a cofactor. Mostly expressed in the expanding cells, specifically in roots (except in root tips) and flowers (at protein level). Also detected in cotyledons, hypocotyls and trichome stalks.

The protein localises to the cell membrane. The protein resides in the cytoplasm. It localises to the cytoskeleton. Functionally, may be involved in intracellular signaling through interaction with PtdInsPs and calmodulin (CaM); may keep PtdInsPs attached to the plasma membrane until Ca(2+)-CaM reaches a competitive concentration subsequent to an increase triggered by a stimulus, thus leading to PtdInsPs release and subsequent activation of InsPs-dependent signaling cascade. Binds to microtubules and inhibits tubulin polymerization. Regulates directional cell growth and cortical microtubule organization by destabilizing microtubules (e.g. in cotyledon pavement cells). This is Plasma membrane-associated cation-binding protein 2 from Arabidopsis thaliana (Mouse-ear cress).